Consider the following 737-residue polypeptide: Relaxin receptor 2 (737 aa).

The Extracellular segment spans residues 1 to 399; it reads MWLLLHVILL…SSSEDLLANG (399 aa). Residues 27–64 enclose the LDL-receptor class A domain; sequence LCPKGYFPCGNLTKCLPRAFHCDGVDDCGNGADEDNCG. 3 disulfides stabilise this stretch: cysteine 28–cysteine 41, cysteine 35–cysteine 54, and cysteine 48–cysteine 63. N-linked (GlcNAc...) asparagine glycosylation occurs at asparagine 37. N-linked (GlcNAc...) asparagine glycosylation is present at asparagine 121. LRR repeat units follow at residues 121-142, 145-166, 169-190, 193-214, 217-238, 241-262, 265-286, 289-310, 313-334, and 337-358; these read NVTL…VFSR, ELRK…AFLG, NLQI…IFKD, QLAW…SFMG, SLFF…LCAQ, QLNW…TFLT, SLTV…TFSS, NLGE…LFSD, LLQK…QFGS, and QLQS…MFQP. N-linked (GlcNAc...) asparagine glycosylation is present at asparagine 257. Residues asparagine 318, asparagine 350, and asparagine 361 are each glycosylated (N-linked (GlcNAc...) asparagine). Residues 400–420 traverse the membrane as a helical segment; sequence ILRVSVWVIAFITCVGNFLVI. Topologically, residues 421–438 are cytoplasmic; sequence AVRSLIKAENTTHAMSIK. Residues 439–459 traverse the membrane as a helical segment; the sequence is ILCCADCLMGVYLFSVGVFDI. The Extracellular portion of the chain corresponds to 460–478; the sequence is KYRGQYQKYALLWMESVPC. The cysteines at positions 478 and 556 are disulfide-linked. Residues 479–501 form a helical membrane-spanning segment; sequence RLLGFLATLSTEVSVLLLTFLTL. Topologically, residues 502-520 are cytoplasmic; it reads EKFLVIVFPFSNLRLGKRQ. The chain crosses the membrane as a helical span at residues 521–541; it reads TAVALASIWVVGFLIAAVPFT. At 542–575 the chain is on the extracellular side; it reads REDYFGNFYGKNGVCFPLHYDQAEDFGSRGYSLG. A helical transmembrane segment spans residues 576–596; it reads IFLGVNLLAFLVIVISYVTMF. Over 597–622 the chain is Cytoplasmic; sequence CSIHKTALQTAEVRSHIGKEVAVANR. A helical transmembrane segment spans residues 623–643; the sequence is FFFIVFSDAICWIPVFVVKIL. At 644–653 the chain is on the extracellular side; that stretch reads SLLQVEIPGT. The helical transmembrane segment at 654 to 674 threads the bilayer; that stretch reads ITSWIVVFFLPVNSALNPILY. The Cytoplasmic portion of the chain corresponds to 675-737; sequence TLTTSFFKDK…GDSIMKPVSP (63 aa).

The protein belongs to the G-protein coupled receptor 1 family. As to expression, expressed in embryonic and adult gonads of males and females, as well in male gubernarculum. Expressed also in brain. Not detected in kidney, spleen and heart.

It localises to the cell membrane. Functionally, receptor for relaxin. The activity of this receptor is mediated by G proteins leading to stimulation of adenylate cyclase and an increase of cAMP. May also be a receptor for Leydig insulin-like peptide (INSL3). This is Relaxin receptor 2 (Rxfp2) from Mus musculus (Mouse).